Reading from the N-terminus, the 333-residue chain is T-cell surface glycoprotein CD1b-2 (333 aa).

A signal peptide spans 1–20; it reads MLLLPLLLLGVILPGGDNED. Over 21–302 the chain is Extracellular; that stretch reads VFQGPTSFHL…LYWGHPTSIG (282 aa). N38, N75, and N146 each carry an N-linked (GlcNAc...) asparagine glycan. Cystine bridges form between C120-C184, C149-C163, and C224-C279. Residues 185–295 enclose the Ig-like domain; it reads PRYLLGVLDA…LGDQDIILYW (111 aa). A helical membrane pass occupies residues 303-323; that stretch reads LILVAIIVPSLILSICLALWF. Over 324–333 the chain is Cytoplasmic; that stretch reads WRRWSYQNIL. The Internalization signal motif lies at 329 to 332; sequence YQNI.

Heterodimer with B2M (beta-2-microglobulin). Interacts with saposin C.

It is found in the cell membrane. Its subcellular location is the endosome membrane. The protein resides in the lysosome membrane. Antigen-presenting protein that binds self and non-self lipid and glycolipid antigens and presents them to T-cell receptors on natural killer T-cells. This is T-cell surface glycoprotein CD1b-2 from Ovis aries (Sheep).